A 185-amino-acid chain; its full sequence is Elongation factor P (185 aa).

It belongs to the elongation factor P family.

It localises to the cytoplasm. Its pathway is protein biosynthesis; polypeptide chain elongation. Involved in peptide bond synthesis. Stimulates efficient translation and peptide-bond synthesis on native or reconstituted 70S ribosomes in vitro. Probably functions indirectly by altering the affinity of the ribosome for aminoacyl-tRNA, thus increasing their reactivity as acceptors for peptidyl transferase. This Nostoc punctiforme (strain ATCC 29133 / PCC 73102) protein is Elongation factor P.